Reading from the N-terminus, the 332-residue chain is Alpha-N-acetylgalactosaminide alpha-2,6-sialyltransferase 6 (332 aa).

Residues 1–26 (MACPRPLSQCDHTPLPGPPAGHWPLP) form a disordered region. Topologically, residues 1 to 42 (MACPRPLSQCDHTPLPGPPAGHWPLPLSRRRREMKSNKEQRS) are cytoplasmic. A helical; Signal-anchor for type II membrane protein transmembrane segment spans residues 43–63 (AVFVILFALITILILYSSSSA). Over 64 to 332 (NEVFHYGSLR…GITFSHPSWT (269 aa)) the chain is Lumenal. The N-linked (GlcNAc...) asparagine glycan is linked to asparagine 97. Residues cysteine 107 and cysteine 255 are joined by a disulfide bond.

Belongs to the glycosyltransferase 29 family.

The protein resides in the golgi apparatus membrane. It carries out the reaction a ganglioside GM1b (d18:1(4E)) + CMP-N-acetyl-beta-neuraminate = a ganglioside GD1alpha (d18:1(4E)) + CMP + H(+). It catalyses the reaction N-acetyl-alpha-neuraminosyl-(2-&gt;3)-beta-D-galactosyl-(1-&gt;3)-N-acetyl-beta-D-glucosaminyl-(1-&gt;3)-beta-D-galactosyl-(1-&gt;4)-beta-D-glucosyl-(1&lt;-&gt;1')-N-acyl-sphing-4-enine + CMP-N-acetyl-beta-neuraminate = N-acetyl-alpha-neuraminosyl-(2-&gt;3)-beta-D-galactosyl-(1-&gt;3)-[N-acetyl-alpha-neuraminosyl-(2-&gt;6)]-N-acetyl-beta-D-glucosaminyl-(1-&gt;3)-beta-D-galactosyl-(1-&gt;4)-beta-D-glucosyl-(1&lt;-&gt;1')-N-acyl-sphing-4-enine + CMP + H(+). The enzyme catalyses a globoside MSGG + CMP-N-acetyl-beta-neuraminate = a globoside DSGG + CMP + H(+). The catalysed reaction is a ganglioside GD1a (d18:1(4E)) + CMP-N-acetyl-beta-neuraminate = a ganglioside GT1aalpha (d18:1(4E)) + CMP + H(+). It carries out the reaction a ganglioside GT1b (d18:1(4E)) + CMP-N-acetyl-beta-neuraminate = a ganglioside GQ1balpha (d18:1(4E)) + CMP + H(+). It catalyses the reaction 3-O-[alpha-Neu5Ac-(2-&gt;3)-beta-D-Gal-(1-&gt;3)-alpha-D-GalNAc]-L-Ser-[protein] + CMP-N-acetyl-beta-neuraminate = a 3-O-{alpha-Neu5Ac-(2-&gt;3)-beta-D-Gal-(1-&gt;3)-[alpha-Neu5Ac-(2-&gt;6)]-alpha-D-GalNAc}-L-seryl-[protein] + CMP + H(+). The enzyme catalyses 3-O-[alpha-Neu5Ac-(2-&gt;3)-beta-D-Gal-(1-&gt;3)-alpha-D-GalNAc]-L-Thr-[protein] + CMP-N-acetyl-beta-neuraminate = a 3-O-{alpha-Neu5Ac-(2-&gt;3)-beta-D-Gal-(1-&gt;3)-[alpha-Neu5Ac-(2-&gt;6)]-alpha-D-GalNAc}-L-threonyl-[protein] + CMP + H(+). Functionally, transfers the sialyl group (N-acetyl-alpha-neuraminyl or NeuAc) from CMP-NeuAc onto glycoproteins and glycolipids, forming an alpha-2,6-linkage. Produces branched type disialyl structures by transfer of a sialyl group onto the GalNAc or GlcNAc residue inside backbone core chains having a terminal sialic acid with an alpha-2,3-linkage on Gal. ST6GalNAcVI prefers glycolipids to glycoproteins, predominantly catalyzing the biosynthesis of ganglioside GD1alpha from GM1b. Besides GMb1, MSGG and other glycolipids, it shows activity towards sialyl Lc4Cer generating disialyl Lc4Cer, which can lead to the synthesis of disialyl Lewis a (Le(a)), suggested to be a cancer-associated antigen. Also has activity toward GD1a and GT1b, and can generate DSGG (disialylgalactosylgloboside) from MSGG (monosialylgalactosylgloboside). The sequence is that of Alpha-N-acetylgalactosaminide alpha-2,6-sialyltransferase 6 (ST6GALNAC6) from Bos taurus (Bovine).